The chain runs to 213 residues: Large ribosomal subunit protein uL3 (213 aa).

Gln-151 bears the N5-methylglutamine mark.

It belongs to the universal ribosomal protein uL3 family. Part of the 50S ribosomal subunit. Forms a cluster with proteins L14 and L19. Post-translationally, methylated by PrmB.

Its function is as follows. One of the primary rRNA binding proteins, it binds directly near the 3'-end of the 23S rRNA, where it nucleates assembly of the 50S subunit. The polypeptide is Large ribosomal subunit protein uL3 (Rhizobium etli (strain ATCC 51251 / DSM 11541 / JCM 21823 / NBRC 15573 / CFN 42)).